The primary structure comprises 135 residues: MGLTSQLIPALVCLLVCTSHFVHGHKCDITLEEIIKMLNILTSQKNSCMELPVADVFAAPKNATEKETFCRAGIELRRIYRNHMCLNKFLGGLDRNLSSLASKTCSVNEAKTSTSTLRDLLERLKTIMKEKYSKC.

The first 24 residues, 1–24 (MGLTSQLIPALVCLLVCTSHFVHG), serve as a signal peptide directing secretion. 3 disulfides stabilise this stretch: Cys27–Cys135, Cys48–Cys85, and Cys70–Cys105. Asn62 and Asn96 each carry an N-linked (GlcNAc...) asparagine glycan.

Belongs to the IL-4/IL-13 family.

The protein localises to the secreted. Participates in at least several B-cell activation processes as well as of other cell types. It is a costimulator of DNA-synthesis. It induces the expression of class II MHC molecules on resting B-cells. It enhances both secretion and cell surface expression of IgE and IgG1. It also regulates the expression of the low affinity Fc receptor for IgE (CD23) on both lymphocytes and monocytes. Positively regulates IL31RA expression in macrophages. Stimulates autophagy in dendritic cells by interfering with mTORC1 signaling and through the induction of RUFY4. The sequence is that of Interleukin-4 (IL4) from Capra hircus (Goat).